The following is a 487-amino-acid chain: 3-octaprenyl-4-hydroxybenzoate carboxy-lyase (487 aa).

Asn172 is a binding site for Mn(2+). Prenylated FMN contacts are provided by residues 175 to 177 (IYR), 189 to 191 (RWL), and 194 to 195 (RG). A Mn(2+)-binding site is contributed by Glu238. Asp287 serves as the catalytic Proton donor.

Belongs to the UbiD family. In terms of assembly, homohexamer. Requires prenylated FMN as cofactor. Mn(2+) is required as a cofactor.

The protein localises to the cell membrane. The enzyme catalyses a 4-hydroxy-3-(all-trans-polyprenyl)benzoate + H(+) = a 2-(all-trans-polyprenyl)phenol + CO2. It participates in cofactor biosynthesis; ubiquinone biosynthesis. Functionally, catalyzes the decarboxylation of 3-octaprenyl-4-hydroxy benzoate to 2-octaprenylphenol, an intermediate step in ubiquinone biosynthesis. In Dechloromonas aromatica (strain RCB), this protein is 3-octaprenyl-4-hydroxybenzoate carboxy-lyase.